The primary structure comprises 595 residues: ATP-dependent lipid A-core flippase (595 aa).

Positions methionine 1–valine 20 are disordered. Residues serine 9–alanine 19 are compositionally biased toward low complexity. 4 helical membrane-spanning segments follow: residues tryptophan 41–isoleucine 61, glycine 81–glycine 101, valine 169–valine 189, and isoleucine 266–alanine 286. Positions leucine 45–arginine 326 constitute an ABC transmembrane type-1 domain. In terms of domain architecture, ABC transporter spans isoleucine 357–arginine 592. ATP is bound at residue glycine 390–serine 397.

Belongs to the ABC transporter superfamily. Lipid exporter (TC 3.A.1.106) family. In terms of assembly, homodimer.

The protein localises to the cell inner membrane. The catalysed reaction is ATP + H2O + lipid A-core oligosaccharideSide 1 = ADP + phosphate + lipid A-core oligosaccharideSide 2.. Its function is as follows. Involved in lipopolysaccharide (LPS) biosynthesis. Translocates lipid A-core from the inner to the outer leaflet of the inner membrane. Transmembrane domains (TMD) form a pore in the inner membrane and the ATP-binding domain (NBD) is responsible for energy generation. The polypeptide is ATP-dependent lipid A-core flippase (Psychrobacter arcticus (strain DSM 17307 / VKM B-2377 / 273-4)).